Reading from the N-terminus, the 331-residue chain is UPF0324 membrane protein SACOL0411 (331 aa).

11 helical membrane-spanning segments follow: residues 9–26, 31–48, 69–88, 93–115, 122–144, 154–176, 183–202, 217–234, 247–269, 273–295, and 308–330; these read FMIG…SFLA, ILDK…AILY, LLRF…DIIG, LLAI…NKLL, ALLL…APIF, SIGI…YAIF, YGAW…LAGG, LGRV…ILIM, ISIP…VTIP, LNIL…GLNV, and LMTI…HWLY.

This sequence belongs to the UPF0324 family.

Its subcellular location is the cell membrane. The protein is UPF0324 membrane protein SACOL0411 of Staphylococcus aureus (strain COL).